A 189-amino-acid chain; its full sequence is Auxin-responsive protein IAA3 (189 aa).

The EAR-like (transcriptional repression) signature appears at L12–L16. The segment at T42 to I65 is disordered. Residues D43–E56 show a composition bias toward basic and acidic residues. The 88-residue stretch at G92 to G179 folds into the PB1 domain.

Belongs to the Aux/IAA family. Homodimers and heterodimers. Interacts with TPL. Interacts with TIR1, the F-box component of the Skp1-Cdc53/cullin-F-box (SCFTIR1) E3 ubiquitin ligase complex. In terms of processing, phosphorylated by phytochrome A in vitro. As to expression, highly expressed in stems and flowers. Expressed in hypocotyls, cotyledons and leaves, but barely detected in roots. Expressed in root tips. In the root meristem, specifically detected at the vascular tissue transition zone.

It is found in the nucleus. Aux/IAA proteins are short-lived transcriptional factors that function as repressors of early auxin response genes at low auxin concentrations. Repression is thought to result from the interaction with auxin response factors (ARFs), proteins that bind to the auxin-responsive promoter element (AuxRE). Plays a central role in auxin regulation of root growth, in gravitropism, and in lateral root formation. Regulated by an auxin-induced protein turnover. Formation of heterodimers with ARF proteins may alter their ability to modulate early auxin response genes expression. When activated by cytokinin, restricts the expression of the PIN genes to the vascular transition zone. Induction of SHY2 in the vascular transition zone restricts BRX expression to down-regulate PIN3 and thus limit meristem growth, but proper SHY2 expression requires BRX. Involved in meristem growth and in determining its size. May participate in strigolactone signaling to regulate meristem size and lateral root formation. The protein is Auxin-responsive protein IAA3 (IAA3) of Arabidopsis thaliana (Mouse-ear cress).